Here is a 147-residue protein sequence, read N- to C-terminus: Acidic phospholipase A2 S9-53F (147 aa).

Residues 1-19 form the signal peptide; sequence MYPAHLLVLLAVCVSLLGA. Residues 20 to 27 constitute a propeptide that is removed on maturation; the sequence is SDIPPQPL. Cystine bridges form between Cys38–Cys99, Cys54–Cys146, Cys56–Cys72, Cys71–Cys127, Cys78–Cys120, Cys88–Cys113, and Cys106–Cys118. Residues Tyr55, Gly57, and Gly59 each coordinate Ca(2+). The active site involves His75. Asp76 contributes to the Ca(2+) binding site. The active site involves Asp121.

The protein belongs to the phospholipase A2 family. Group I subfamily. D49 sub-subfamily. Ca(2+) serves as cofactor. In terms of tissue distribution, expressed by the venom gland.

The protein resides in the secreted. The catalysed reaction is a 1,2-diacyl-sn-glycero-3-phosphocholine + H2O = a 1-acyl-sn-glycero-3-phosphocholine + a fatty acid + H(+). Functionally, snake venom phospholipase A2 (PLA2) that inhibits collagen-induced platelet aggregation. PLA2 catalyzes the calcium-dependent hydrolysis of the 2-acyl groups in 3-sn-phosphoglycerides. The polypeptide is Acidic phospholipase A2 S9-53F (Austrelaps superbus (Lowland copperhead snake)).